The primary structure comprises 1095 residues: Putative patatin-like phospholipase domain-containing protein M110.7 (1095 aa).

A helical transmembrane segment spans residues 9 to 29; that stretch reads LLLIFENILELCMCITLVILI. The disordered stretch occupies residues 75-113; that stretch reads HKKRSSKEEMTPDKKRDSSEKISKQPPRELFEPNEQEQV. The segment covering 80-105 has biased composition (basic and acidic residues); the sequence is SKEEMTPDKKRDSSEKISKQPPRELF. Residues 144 to 237, 327 to 416, and 450 to 509 contribute to the a nucleoside 3',5'-cyclic phosphate site; these read VETL…LTSF, RKYE…IQFL, and IETG…TVMA. Residues 768–935 enclose the PNPLA domain; it reads IVFGGGGARG…VNNLPADIMR (168 aa). Positions 772 to 777 match the GXGXXG motif; the sequence is GGGARG. A GXSXG motif is present at residues 799 to 803; the sequence is GTSIG. Catalysis depends on Ser-801, which acts as the Nucleophile. Asp-922 acts as the Proton acceptor in catalysis. Positions 922–924 match the DGA/G motif; that stretch reads DGA.

The protein belongs to the NTE family.

It is found in the membrane. This Caenorhabditis elegans protein is Putative patatin-like phospholipase domain-containing protein M110.7.